The chain runs to 460 residues: GTPase Der (460 aa).

2 EngA-type G domains span residues 3–167 (FTFA…PEPD) and 189–364 (IRVA…AVWN). GTP-binding positions include 9–16 (GRPNVGKS), 56–60 (DTAGL), 119–122 (NKSE), 195–202 (GRPNAGKS), 242–246 (DTAGL), and 307–310 (NKWD). In terms of domain architecture, KH-like spans 365–449 (TRVPTAALNR…PVRIMLREKA (85 aa)).

This sequence belongs to the TRAFAC class TrmE-Era-EngA-EngB-Septin-like GTPase superfamily. EngA (Der) GTPase family. As to quaternary structure, associates with the 50S ribosomal subunit.

GTPase that plays an essential role in the late steps of ribosome biogenesis. This Rhodopseudomonas palustris (strain BisB5) protein is GTPase Der.